Consider the following 140-residue polypeptide: Nucleoside diphosphate kinase (140 aa).

ATP-binding residues include Lys-11, Phe-59, Arg-87, Thr-93, Arg-104, and Asn-114. Residue His-117 is the Pros-phosphohistidine intermediate of the active site.

It belongs to the NDK family. As to quaternary structure, homotetramer. Mg(2+) is required as a cofactor.

Its subcellular location is the cytoplasm. It catalyses the reaction a 2'-deoxyribonucleoside 5'-diphosphate + ATP = a 2'-deoxyribonucleoside 5'-triphosphate + ADP. The catalysed reaction is a ribonucleoside 5'-diphosphate + ATP = a ribonucleoside 5'-triphosphate + ADP. Its function is as follows. Major role in the synthesis of nucleoside triphosphates other than ATP. The ATP gamma phosphate is transferred to the NDP beta phosphate via a ping-pong mechanism, using a phosphorylated active-site intermediate. In Rhodovulum sulfidophilum (Rhodobacter sulfidophilus), this protein is Nucleoside diphosphate kinase.